The primary structure comprises 412 residues: Autophagy-related protein 34 (412 aa).

Residues 246–348 (NDPLLHVEVS…SNEITLKSPL (103 aa)) are AMS1-binding.

Interacts with AMS1, ATG8 and ATG11.

It localises to the preautophagosomal structure membrane. Its function is as follows. Cargo-receptor protein involved in the cytoplasm to vacuole transport (Cvt) and in autophagy. Recognizes cargo proteins, such as AMS1 and delivers them to the pre-autophagosomal structure for eventual engulfment by the autophagosome and targeting to the vacuole. The sequence is that of Autophagy-related protein 34 (ATG34) from Saccharomyces cerevisiae (strain ATCC 204508 / S288c) (Baker's yeast).